A 1105-amino-acid chain; its full sequence is Ran-binding protein 6 (1105 aa).

Ala2 is subject to N-acetylalanine. HEAT repeat units follow at residues 219–257 (FKDF…TVPK), 361–399 (KVVL…GCHQ), 402–440 (EPIL…DFAP), 444–483 (KKFH…DCPK), 866–905 (LPWF…HCSP), 908–946 (FKYV…FGGD), and 949–987 (RSLC…IGKI).

The protein belongs to the importin beta family.

Its subcellular location is the cytoplasm. It localises to the nucleus. In terms of biological role, may function in nuclear protein import as nuclear transport receptor. This chain is Ran-binding protein 6 (Ranbp6), found in Mus musculus (Mouse).